A 442-amino-acid polypeptide reads, in one-letter code: Small RNA 2'-O-methyltransferase (442 aa).

Gly-125 and Asp-151 together coordinate S-adenosyl-L-methionine. Positions 209, 212, 213, and 260 each coordinate Mg(2+).

The protein belongs to the methyltransferase superfamily. HEN1 family. It depends on Mg(2+) as a cofactor. Broadly expressed in the germline and somatic tissues in both hermaphrodites and males.

It is found in the cytoplasm. The protein resides in the nucleus. It localises to the nucleoplasm. Its subcellular location is the cytoplasmic granule. The catalysed reaction is small RNA 3'-end nucleotide + S-adenosyl-L-methionine = small RNA 3'-end 2'-O-methylnucleotide + S-adenosyl-L-homocysteine + H(+). Functionally, methyltransferase that adds a 2'-O-methyl group at the 3'-end of PIWI-interacting RNAs (piRNAs) and small interfering RNAs (siRNAs) which are classes of regulatory RNAs that are involved in gene silencing in endogenous RNA interference (RNAi) pathways. Methylation protects the 3'-end of small RNAs from tailing and trimming and could constitute a recognition signal for appropriate argonaute machineries. Methylates and stabilizes 26G-siRNAs (a class of 26 nucleotide siRNAs that possess a monophosphorylated guanine residue at the 5'-end) when they are bound by argonaute protein ergo-1. This occurs in the female germline and embryo, but not in the male germline. Does not methylate 26G-siRNAs bound by argonaute proteins alg-3 or alg-4. Methylates and stabilizes 21U-piRNAs, which are a class of 21 nucleotide piRNAs that possess a uracil residue at the 5'-end, in the male and female germline. In addition, may play a role in exogenous RNAi (exoRNAi) pathways in the germline. The protein is Small RNA 2'-O-methyltransferase of Caenorhabditis elegans.